Here is a 180-residue protein sequence, read N- to C-terminus: Thiol:disulfide interchange protein TxlA homolog (180 aa).

A helical membrane pass occupies residues 10 to 26; the sequence is LLAVVAIALSAAVYLGF. In terms of domain architecture, Thioredoxin spans 34–143; the sequence is SLEAQAQRAI…LEQNITALVA (110 aa). Cysteines 64 and 67 form a disulfide.

It belongs to the thioredoxin family.

Its subcellular location is the cell membrane. Functionally, required for disulfide bond formation in some proteins. Acts by transferring its disulfide bond to other proteins and is reduced in the process. The polypeptide is Thiol:disulfide interchange protein TxlA homolog (txlA) (Synechocystis sp. (strain ATCC 27184 / PCC 6803 / Kazusa)).